Here is a 91-residue protein sequence, read N- to C-terminus: uncharacterized protein (91 aa).

The protein localises to the plastid. The protein resides in the chloroplast. This is an uncharacterized protein from Phalaenopsis aphrodite subsp. formosana (Moth orchid).